Reading from the N-terminus, the 323-residue chain is Aspartate carbamoyltransferase catalytic subunit (323 aa).

The carbamoyl phosphate site is built by R71 and T72. Residue K99 participates in L-aspartate binding. Carbamoyl phosphate-binding residues include R121, H151, and Q154. Positions 184 and 239 each coordinate L-aspartate. Positions 280 and 281 each coordinate carbamoyl phosphate.

This sequence belongs to the aspartate/ornithine carbamoyltransferase superfamily. ATCase family. Heterododecamer (2C3:3R2) of six catalytic PyrB chains organized as two trimers (C3), and six regulatory PyrI chains organized as three dimers (R2).

The enzyme catalyses carbamoyl phosphate + L-aspartate = N-carbamoyl-L-aspartate + phosphate + H(+). It functions in the pathway pyrimidine metabolism; UMP biosynthesis via de novo pathway; (S)-dihydroorotate from bicarbonate: step 2/3. Functionally, catalyzes the condensation of carbamoyl phosphate and aspartate to form carbamoyl aspartate and inorganic phosphate, the committed step in the de novo pyrimidine nucleotide biosynthesis pathway. This Ralstonia nicotianae (strain ATCC BAA-1114 / GMI1000) (Ralstonia solanacearum) protein is Aspartate carbamoyltransferase catalytic subunit.